The sequence spans 832 residues: uncharacterized protein (832 aa).

This is an uncharacterized protein from Rickettsia bellii (strain RML369-C).